Reading from the N-terminus, the 379-residue chain is Queuine tRNA-ribosyltransferase (379 aa).

The active-site Proton acceptor is the D94. Substrate contacts are provided by residues 94 to 98, D148, Q191, and G218; that span reads DSGGF. Residues 249 to 255 form an RNA binding region; the sequence is GVGSPDS. The Nucleophile role is filled by D268. The tract at residues 273–277 is RNA binding; important for wobble base 34 recognition; that stretch reads TRIAR. Positions 306, 308, 311, and 337 each coordinate Zn(2+).

The protein belongs to the queuine tRNA-ribosyltransferase family. As to quaternary structure, homodimer. Within each dimer, one monomer is responsible for RNA recognition and catalysis, while the other monomer binds to the replacement base PreQ1. It depends on Zn(2+) as a cofactor.

It catalyses the reaction 7-aminomethyl-7-carbaguanine + guanosine(34) in tRNA = 7-aminomethyl-7-carbaguanosine(34) in tRNA + guanine. The protein operates within tRNA modification; tRNA-queuosine biosynthesis. In terms of biological role, catalyzes the base-exchange of a guanine (G) residue with the queuine precursor 7-aminomethyl-7-deazaguanine (PreQ1) at position 34 (anticodon wobble position) in tRNAs with GU(N) anticodons (tRNA-Asp, -Asn, -His and -Tyr). Catalysis occurs through a double-displacement mechanism. The nucleophile active site attacks the C1' of nucleotide 34 to detach the guanine base from the RNA, forming a covalent enzyme-RNA intermediate. The proton acceptor active site deprotonates the incoming PreQ1, allowing a nucleophilic attack on the C1' of the ribose to form the product. After dissociation, two additional enzymatic reactions on the tRNA convert PreQ1 to queuine (Q), resulting in the hypermodified nucleoside queuosine (7-(((4,5-cis-dihydroxy-2-cyclopenten-1-yl)amino)methyl)-7-deazaguanosine). The polypeptide is Queuine tRNA-ribosyltransferase (Listeria monocytogenes serotype 4a (strain HCC23)).